We begin with the raw amino-acid sequence, 623 residues long: Translation initiation factor IF-2 (623 aa).

The segment covering 1-18 (MTLNKKTNNENSSKTTPK) has biased composition (low complexity). 2 disordered regions span residues 1–21 (MTLNKKTNNENSSKTTPKLSK) and 92–115 (PQKEQTPPQLQPQKPPLTKSKLQA). The tr-type G domain occupies 125–293 (KTPPIVTIMG…ILLFSEIQNL (169 aa)). Residues 134-141 (GHVDHGKT) are G1. 134 to 141 (GHVDHGKT) provides a ligand contact to GTP. The interval 159–163 (GITQH) is G2. The segment at 180–183 (DTPG) is G3. GTP-binding positions include 180–184 (DTPGH) and 234–237 (NKVD). The segment at 234–237 (NKVD) is G4. The tract at residues 270–272 (SAL) is G5.

It belongs to the TRAFAC class translation factor GTPase superfamily. Classic translation factor GTPase family. IF-2 subfamily.

It is found in the cytoplasm. Functionally, one of the essential components for the initiation of protein synthesis. Protects formylmethionyl-tRNA from spontaneous hydrolysis and promotes its binding to the 30S ribosomal subunits. Also involved in the hydrolysis of GTP during the formation of the 70S ribosomal complex. This is Translation initiation factor IF-2 from Aster yellows witches'-broom phytoplasma (strain AYWB).